We begin with the raw amino-acid sequence, 195 residues long: Protein GrpE (195 aa).

The protein belongs to the GrpE family. As to quaternary structure, homodimer.

It localises to the cytoplasm. Its function is as follows. Participates actively in the response to hyperosmotic and heat shock by preventing the aggregation of stress-denatured proteins, in association with DnaK and GrpE. It is the nucleotide exchange factor for DnaK and may function as a thermosensor. Unfolded proteins bind initially to DnaJ; upon interaction with the DnaJ-bound protein, DnaK hydrolyzes its bound ATP, resulting in the formation of a stable complex. GrpE releases ADP from DnaK; ATP binding to DnaK triggers the release of the substrate protein, thus completing the reaction cycle. Several rounds of ATP-dependent interactions between DnaJ, DnaK and GrpE are required for fully efficient folding. This Francisella tularensis subsp. tularensis (strain FSC 198) protein is Protein GrpE.